Consider the following 257-residue polypeptide: Phosphonates import ATP-binding protein PhnC (257 aa).

One can recognise an ABC transporter domain in the interval 4–248 (IEFKDVRKVY…AFNEIYGRSI (245 aa)). ATP is bound at residue 37 to 44 (GLSGSGKS).

Belongs to the ABC transporter superfamily. Phosphonates importer (TC 3.A.1.9.1) family. In terms of assembly, the complex is composed of two ATP-binding proteins (PhnC), two transmembrane proteins (PhnE) and a solute-binding protein (PhnD).

The protein localises to the cell membrane. It carries out the reaction phosphonate(out) + ATP + H2O = phosphonate(in) + ADP + phosphate + H(+). Part of the ABC transporter complex PhnCDE involved in phosphonates import. Responsible for energy coupling to the transport system. This Staphylococcus saprophyticus subsp. saprophyticus (strain ATCC 15305 / DSM 20229 / NCIMB 8711 / NCTC 7292 / S-41) protein is Phosphonates import ATP-binding protein PhnC.